Reading from the N-terminus, the 326-residue chain is Phosphotriesterase homology protein (326 aa).

6 residues coordinate Zn(2+): His-22, His-24, Lys-145, His-178, His-207, and Asp-264. Lys-145 is subject to N6-carboxylysine.

This sequence belongs to the metallo-dependent hydrolases superfamily. Phosphotriesterase family. Zn(2+) is required as a cofactor.

This Mycobacterium tuberculosis (strain CDC 1551 / Oshkosh) protein is Phosphotriesterase homology protein (php).